We begin with the raw amino-acid sequence, 1036 residues long: MKRVGLIGVIMAALLVISATPVMAGVSVKVSVNTTYPGELTVENFNLTPTYGRVPLTINITDVYLKNTNLTTPLSGTVYLYVNGQIKNNYYCSVTQTNNTTSWMSCGIEYTITDTSQTNISVGNKTDYLQNVTLTLWTTQLPESYVPQIPTLDLKDDGPISVDVLKIPSLKLSDDQVNVGETVTIEANWNYYAKEDGTRRIAVVSWADYRNIRSGATIDVATLLDKSKMTISLPEDGGSNSWDFTPTEPGYYVVVAFVDDTNFSDVLVFRATPTAAEKPTVSISVSKSVVALGDYIKVGASMSTDQAVKPIAVFITGANQTEVLCSYPEPGASTVGAWTVKEACGDDEWWIQIKDRPEGVYVAKIDVGEGELRAEATAVFQVVKPKILSLDVPSQHVKGQDLVITGTTNLAKSGTEDDSGSNAAENKAYLVIKDLSGKEVFNDTLSNQVYDSTGGKVKSNAVSLIDSDGSFKFKIDYFGKYFATETGFYIAEVKIQSDSLGEYTDTETATFEVVKPELKLIADKTTVTRGDTVTFTIDTNLKINSEVKFKIDDLAFCSGDPDCDVKEKTYYVDALGDVVIKLDVNTEAPLTDYKFTAEIPGLGISTDIRVSVVKQTLDISVDRTTVPRGGDIRVTGSSTADGVYIYASDSGVFTVGDTPVPDVDLKTKGSKINTTDVPYMEPDDNDNIDFQISVNVTGVETGTYYLYFYAPANISVVDKASDPQKIIAVTVTDPQIVEVTAPSKVPYQSKFEVSVLTDPGDRDNVEVRLVLSGPNVRDTTVADWASVDTNNYFNKTVDLRDIAKNKLNLDALEPGLYVLTAELRFKQSLGGEKVDSEDKLIEILGLTFEVDVNTPVVIGDEIVVNITTDRLEAGYDKIFVTLVGTNYKVTQVATLNSEGKATVTFETYGMSAGTYKVYVRDTMDTCSETDQYTWVDEHYMLDPASELAPMYKADDDVLVIKTIELLETAPTTTTVVTTTTAVTTTTVATTTTAVETTTTEAVTTTTEAQQGGGVPGFEAVFAIAGLLAVAYLLRRK.

A signal peptide spans Met-1–Ala-24. Residues Gly-1011 to Leu-1033 traverse the membrane as a helical segment.

It localises to the membrane. This is an uncharacterized protein from Archaeoglobus fulgidus (strain ATCC 49558 / DSM 4304 / JCM 9628 / NBRC 100126 / VC-16).